The following is a 199-amino-acid chain: MPSPAPSGLAPGFLVAAPALGDPNFAGSLVLMAEHHGEGALGFVVNRPGPVTVAEVLASVDEDLRRAAEANGRAGAPVLVGGPVQPERLWILFRPGGIGADAEGAVPVGNGLSLGGSRELLEALVRAPRGDPFLLLLGYAGWAPMQVEREVAAGAWVPLELEGSDLVFDVPLEQRWETAVRRLGLEPGGFLVGGGGASA.

The protein belongs to the UPF0301 (AlgH) family.

This is UPF0301 protein Anae109_0457 from Anaeromyxobacter sp. (strain Fw109-5).